Reading from the N-terminus, the 310-residue chain is Protein LRATD2 (310 aa).

Residues 1–76 (MGNQVEKLTH…PPPQPQPYDP (76 aa)) are disordered. Residues 54-64 (PDGGGLPDGGD) are compositionally biased toward gly residues. Pro residues predominate over residues 65–74 (GPPPPQPQPY). An LRAT domain is found at 122–217 (VEFVSQAQYP…CRYGKREFKI (96 aa)). The segment at 274–310 (HPAEPEEGDSNVARTTPPPGRPPAPSSEEEDGEAVAH) is disordered. A compositionally biased stretch (pro residues) spans 289–298 (TPPPGRPPAP). Over residues 300–310 (SEEEDGEAVAH) the composition is skewed to acidic residues.

Belongs to the LRATD family. As to expression, expressed in esophageal squamous cell carcinomas.

The protein is Protein LRATD2 of Homo sapiens (Human).